Here is a 983-residue protein sequence, read N- to C-terminus: Bifunctional glutamine synthetase adenylyltransferase/adenylyl-removing enzyme (983 aa).

The interval 1–468 is adenylyl removase; the sequence is MTVENAKALF…KQYAALFAQA (468 aa). The interval 473 to 983 is adenylyl transferase; that stretch reads AASGNLVFTG…FDKLVGHGAD (511 aa).

It belongs to the GlnE family. The cofactor is Mg(2+).

It catalyses the reaction [glutamine synthetase]-O(4)-(5'-adenylyl)-L-tyrosine + phosphate = [glutamine synthetase]-L-tyrosine + ADP. It carries out the reaction [glutamine synthetase]-L-tyrosine + ATP = [glutamine synthetase]-O(4)-(5'-adenylyl)-L-tyrosine + diphosphate. Its function is as follows. Involved in the regulation of glutamine synthetase GlnA, a key enzyme in the process to assimilate ammonia. When cellular nitrogen levels are high, the C-terminal adenylyl transferase (AT) inactivates GlnA by covalent transfer of an adenylyl group from ATP to specific tyrosine residue of GlnA, thus reducing its activity. Conversely, when nitrogen levels are low, the N-terminal adenylyl removase (AR) activates GlnA by removing the adenylyl group by phosphorolysis, increasing its activity. The regulatory region of GlnE binds the signal transduction protein PII (GlnB) which indicates the nitrogen status of the cell. The protein is Bifunctional glutamine synthetase adenylyltransferase/adenylyl-removing enzyme of Brucella suis biovar 1 (strain 1330).